An 89-amino-acid chain; its full sequence is Small ribosomal subunit protein bS20 (89 aa).

Residues 1–28 (MTLANIKSAKKRAIQSEKRRQHNASQRS) form a disordered region.

The protein belongs to the bacterial ribosomal protein bS20 family.

Binds directly to 16S ribosomal RNA. This Pasteurella multocida (strain Pm70) protein is Small ribosomal subunit protein bS20.